A 357-amino-acid polypeptide reads, in one-letter code: Arginine kinase Met e 2 (357 aa).

One can recognise a Phosphagen kinase N-terminal domain in the interval 9–91; it reads KLEAGFKKLE…FDPIIEDYHV (83 aa). L-arginine is bound at residue 64-68; the sequence is GVGIY. One can recognise a Phosphagen kinase C-terminal domain in the interval 119–356; that stretch reads FVISTRVRCG…LELIKIEKEM (238 aa). Residues 122–126 and H185 each bind ATP; that span reads STRVR. E225 provides a ligand contact to L-arginine. R229 provides a ligand contact to ATP. C271 lines the L-arginine pocket. Residues 280-284 and 309-314 contribute to the ATP site; these read RASVH and RGTRGE. L-arginine is bound at residue E314.

It belongs to the ATP:guanido phosphotransferase family.

It catalyses the reaction L-arginine + ATP = N(omega)-phospho-L-arginine + ADP + H(+). Catalyzes the reversible transfer of high energy ATP gamma-phosphate group to L-arginine. In Metapenaeus ensis (Greasyback shrimp), this protein is Arginine kinase Met e 2.